The chain runs to 260 residues: Recombination-promoting nuclease RpnD (260 aa).

It belongs to the Rpn/YhgA-like nuclease family.

Functionally, a low activity DNA endonuclease probably yielding 3'-hydroxyl ends. Involved in RecA-independent recombination and horizontal gene transfer. This chain is Recombination-promoting nuclease RpnD (rpnD), found in Escherichia coli O157:H7.